Reading from the N-terminus, the 384-residue chain is tRNA(Met) cytidine acetate ligase (384 aa).

Residues 7-20, G101, N153, and R178 each bind ATP; that span reads VAEYNPFHSGHEFL.

It belongs to the TmcAL family.

The protein resides in the cytoplasm. It carries out the reaction cytidine(34) in elongator tRNA(Met) + acetate + ATP = N(4)-acetylcytidine(34) in elongator tRNA(Met) + AMP + diphosphate. Functionally, catalyzes the formation of N(4)-acetylcytidine (ac(4)C) at the wobble position of elongator tRNA(Met), using acetate and ATP as substrates. First activates an acetate ion to form acetyladenylate (Ac-AMP) and then transfers the acetyl group to tRNA to form ac(4)C34. This Lactobacillus delbrueckii subsp. bulgaricus (strain ATCC BAA-365 / Lb-18) protein is tRNA(Met) cytidine acetate ligase.